The following is a 161-amino-acid chain: MKVLEERNAFLSDYEVLKFLTDLEKKHLWDQKSLAALKKSRSKGKQNRPYNHPELQGITRNVVNYLSINKNFINQEDEGEERESSGAKDAEKSGISKMSDESFAELMTKLNSFKLFKAEKLQIVNQLPANMVHLYSIVEECDARFDEKTIEEMLEIISGYA.

Residues 75–96 (QEDEGEERESSGAKDAEKSGIS) are disordered. Residues 82–96 (RESSGAKDAEKSGIS) are compositionally biased toward basic and acidic residues.

The protein belongs to the eukaryotic RPC9 RNA polymerase subunit family. In terms of assembly, component of the RNA polymerase III (Pol III) complex consisting of 17 subunits. Forms a Pol III subcomplex with RPC25/RPC8. Interacts with BURF1/TDS4.

The protein localises to the nucleus. DNA-dependent RNA polymerase catalyzes the transcription of DNA into RNA using the four ribonucleoside triphosphates as substrates. Specific peripheric component of RNA polymerase III which synthesizes small RNAs, such as 5S rRNA and tRNAs. The RPC25/RPC8-RPC17/RPC9 subcomplex may bind Pol III transcripts emerging from the adjacent exit pore during elongation. This chain is DNA-directed RNA polymerase III subunit RPC9 (RPC17), found in Saccharomyces cerevisiae (strain ATCC 204508 / S288c) (Baker's yeast).